The primary structure comprises 146 residues: Small ribosomal subunit protein bS16 (146 aa).

Over residues serine 84–tyrosine 102 the composition is skewed to basic and acidic residues. The interval serine 84–glutamate 146 is disordered. Residues alanine 110–alanine 119 are compositionally biased toward low complexity. Acidic residues predominate over residues proline 120–alanine 130. The span at alanine 131–glutamate 146 shows a compositional bias: low complexity.

It belongs to the bacterial ribosomal protein bS16 family.

This is Small ribosomal subunit protein bS16 from Rhodopirellula baltica (strain DSM 10527 / NCIMB 13988 / SH1).